The primary structure comprises 123 residues: Large ribosomal subunit protein bL19c (123 aa).

The protein belongs to the bacterial ribosomal protein bL19 family.

It localises to the plastid. It is found in the chloroplast. The protein is Large ribosomal subunit protein bL19c (rpl19) of Porphyra purpurea (Red seaweed).